Consider the following 92-residue polypeptide: Defensin-like protein 226 (92 aa).

A signal peptide spans Met1–Ser27. 4 disulfide bridges follow: Cys33–Cys92, Cys43–Cys71, Cys51–Cys86, and Cys69–Cys88.

The protein belongs to the DEFL family.

The protein resides in the secreted. The protein is Defensin-like protein 226 (SCRL2) of Arabidopsis thaliana (Mouse-ear cress).